Consider the following 497-residue polypeptide: Amino acid oxidase fsqB (497 aa).

FAD is bound by residues Val14, Phe15, Asp38, Asn53, Ala57, Asn58, Arg63, Val64, and Val211. Cys414 carries the S-8alpha-FAD cysteine modification. FAD contacts are provided by Phe447 and Lys448.

The protein belongs to the MSOX/MTOX family. Dimer. Requires FAD as cofactor.

It carries out the reaction (2S,4S,5S)-2-amino-6-(3,4-dihydroxyphenyl)-4-hydroxy-5-(methylamino)hexanoyl-[peptidyl-carrier protein] + O2 = (2S,4S)-2-amino-4-[(3S)-7,8-dihydroxy-1,2,3,4-tetrahydroisoquinolin-3-yl]-4-hydroxybutanoyl-[peptidyl-carrier protein] + H2O2. It catalyses the reaction N-methyl-L-dopa + O2 = (3S)-7,8-dihydroxy-1,2,3,4-tetrahydroisoquinoline-3-carboxylate + H2O2. The enzyme catalyses N-methyl-D-dopa + O2 = (3R)-7,8-dihydroxy-1,2,3,4-tetrahydroisoquinoline-3-carboxylate + H2O2. It functions in the pathway secondary metabolite biosynthesis. In terms of biological role, amino acid oxidase; part of the gene cluster that mediates the biosynthesis of the isoquinoline alkaloids fumisoquin A, fumisoquin B and fumisoquin C; as well as small amounts of fumipyrrole as a shunt metabolite. The products of the cluster lead to a brown coloration and are important for growth and conidiation. The nonribosomal peptide synthetase-like protein fsqF, which lacks a canonical condensation domain, is required for addition of a serine-derived dehydroalanine moiety to activated tyrosine but is not essential for the subsequent steps leading to isoquinoline formation. A different enzyme, most likely the ATP-grasp enzyme fsqD, is responsible for activation of tyrosine. Three additional enzymes encoded by the fsq cluster, the N-methyltransferase fsqC, the phenol 2-monooxygenase fsqG and the FAD-dependent oxidase fsqB, catalyze the formation of the isoquinoline ring system in the fumisoquins. FsqB converts the fspF thiolation domain-bound (2S,4S,5S)-2-amino-6-(3,4-dihydroxyphenyl)-4-hydroxy-5-(methylamino)hexanoyl into isoquinoline. The cyclization most likely proceeds via a two-step mechanism, beginning with FAD-dependent oxidation of the methyl group to an iminium species followed by electrophilic attack on the deprotonated phenol. Its function is as follows. Is able to convert N-methyl-3,4-dihydroxy-DL-phenylalanine (N-methyl-DOPA) directly into cyclic isoquinoline, in vitro. The absence of the meta-hydroxyl group, as in L-N-methyl-tyrosine, leads to a 25-fold lower rate of reduction and the formation of the demethylated product L-tyrosine, instead of a cyclic product. Does not accept the D-stereoisomer of N-methyltyrosine, in contrast to N-methyl-DOPA, for which both stereoisomers are oxidized with similar rates. The sequence is that of Amino acid oxidase fsqB from Aspergillus fumigatus (strain ATCC MYA-4609 / CBS 101355 / FGSC A1100 / Af293) (Neosartorya fumigata).